The following is a 627-amino-acid chain: 1-deoxy-D-xylulose-5-phosphate synthase (627 aa).

Thiamine diphosphate contacts are provided by residues histidine 76 and 117-119 (SHA). Residue aspartate 148 coordinates Mg(2+). Residues 149–150 (GA), asparagine 178, phenylalanine 288, and glutamate 370 each bind thiamine diphosphate. A Mg(2+)-binding site is contributed by asparagine 178.

Belongs to the transketolase family. DXPS subfamily. In terms of assembly, homodimer. The cofactor is Mg(2+). Thiamine diphosphate is required as a cofactor.

The enzyme catalyses D-glyceraldehyde 3-phosphate + pyruvate + H(+) = 1-deoxy-D-xylulose 5-phosphate + CO2. It participates in metabolic intermediate biosynthesis; 1-deoxy-D-xylulose 5-phosphate biosynthesis; 1-deoxy-D-xylulose 5-phosphate from D-glyceraldehyde 3-phosphate and pyruvate: step 1/1. Its function is as follows. Catalyzes the acyloin condensation reaction between C atoms 2 and 3 of pyruvate and glyceraldehyde 3-phosphate to yield 1-deoxy-D-xylulose-5-phosphate (DXP). In Cutibacterium acnes (strain DSM 16379 / KPA171202) (Propionibacterium acnes), this protein is 1-deoxy-D-xylulose-5-phosphate synthase.